Here is a 244-residue protein sequence, read N- to C-terminus: 7-cyano-7-deazaguanine synthase (244 aa).

An ATP-binding site is contributed by 14–24 (FSGGQDSATCV). Positions 202, 217, 220, and 223 each coordinate Zn(2+).

This sequence belongs to the QueC family. The cofactor is Zn(2+).

The catalysed reaction is 7-carboxy-7-deazaguanine + NH4(+) + ATP = 7-cyano-7-deazaguanine + ADP + phosphate + H2O + H(+). It participates in purine metabolism; 7-cyano-7-deazaguanine biosynthesis. In terms of biological role, catalyzes the ATP-dependent conversion of 7-carboxy-7-deazaguanine (CDG) to 7-cyano-7-deazaguanine (preQ(0)). In Burkholderia ambifaria (strain MC40-6), this protein is 7-cyano-7-deazaguanine synthase.